The sequence spans 328 residues: Embigin (328 aa).

Positions 1 to 33 (MRSHTGLRALVAPGCSLLLLYLLAATRPDRAVG) are cleaved as a signal peptide. The Extracellular segment spans residues 34–264 (DPADSAFTSL…VLSFMVPLKP (231 aa)). Asn55, Asn62, Asn75, Asn100, Asn117, Asn189, Asn196, Asn214, and Asn219 each carry an N-linked (GlcNAc...) asparagine glycan. Ig-like domains follow at residues 67–160 (EQTR…RVPK) and 159–254 (PKVH…IKLV). Cystine bridges form between Cys88–Cys144 and Cys180–Cys238. Residues 265–285 (FLAIIAEVILLVAIILLCEVY) traverse the membrane as a helical segment. The Cytoplasmic portion of the chain corresponds to 286–328 (TQKKKNDPDDGKEFEQIEQLKSDDSNGIENNVPRYRKTDSGDQ). Residues 289–309 (KKNDPDDGKEFEQIEQLKSDD) show a composition bias toward basic and acidic residues. Residues 289 to 328 (KKNDPDDGKEFEQIEQLKSDDSNGIENNVPRYRKTDSGDQ) form a disordered region. Residue Ser310 is modified to Phosphoserine.

In terms of assembly, interacts with SLC16A1, SLC16A6 and SLC16A7. N-glycosylated. In terms of tissue distribution, detected in prostate, mammary gland and erythrocytes (at protein level). Detected in testis, brain, prostate, heart, kidney, liver, mammary gland and lung.

The protein localises to the cell membrane. The protein resides in the synapse. In terms of biological role, plays a role in the outgrowth of motoneurons and in the formation of neuromuscular junctions. Following muscle denervation, promotes nerve terminal sprouting and the formation of additional acetylcholine receptor clusters at synaptic sites without affecting terminal Schwann cell number or morphology. Delays the retraction of terminal sprouts following re-innervation of denervated endplates. Plays a role in targeting the monocarboxylate transporters SLC16A1, SLC16A6 and SLC16A7 to the cell membrane. In Rattus norvegicus (Rat), this protein is Embigin (Emb).